A 78-amino-acid chain; its full sequence is Large ribosomal subunit protein bL28 (78 aa).

This sequence belongs to the bacterial ribosomal protein bL28 family.

In Edwardsiella ictaluri (strain 93-146), this protein is Large ribosomal subunit protein bL28.